The chain runs to 315 residues: Cobalamin biosynthesis protein CobD (315 aa).

5 helical membrane passes run isoleucine 48 to isoleucine 68, proline 77 to leucine 97, aspartate 150 to tyrosine 170, valine 200 to leucine 220, and methionine 295 to isoleucine 315.

This sequence belongs to the CobD/CbiB family.

It localises to the cell membrane. Its pathway is cofactor biosynthesis; adenosylcobalamin biosynthesis. In terms of biological role, converts cobyric acid to cobinamide by the addition of aminopropanol on the F carboxylic group. This chain is Cobalamin biosynthesis protein CobD, found in Clostridium perfringens (strain 13 / Type A).